The following is a 304-amino-acid chain: Calcium release-activated calcium channel protein 1 (304 aa).

The span at 1-11 shows a compositional bias: pro residues; it reads MHPEPAPPPNN. A disordered region spans residues 1 to 49; that stretch reads MHPEPAPPPNNSNPELPLSGGSSTSGSRRSRRRSGDGEPTGAPPLPPPP. Over 1–88 the chain is Cytoplasmic; the sequence is MHPEPAPPPN…KLYLSRAKLK (88 aa). A required for generation of inwardly rectifying CRAC currents region spans residues 3–49; it reads PEPAPPPNNSNPELPLSGGSSTSGSRRSRRRSGDGEPTGAPPLPPPP. Low complexity predominate over residues 12 to 27; that stretch reads SNPELPLSGGSSTSGS. The tract at residues 39 to 60 is AKAP5 association region; the sequence is PTGAPPLPPPPAVSYPDWIGQS. Residues 71–91 form an interaction with STIM1 region; the sequence is SMQALSWRKLYLSRAKLKASS. A helical membrane pass occupies residues 89–106; that stretch reads ASSRTSALLSGFAMVAMV. Over 107–120 the chain is Extracellular; sequence EVQLDTDHDYPPGL. The chain crosses the membrane as a helical span at residues 121–141; that stretch reads LIVFSACTTVLVAVHLFALMI. At 142-174 the chain is on the cytoplasmic side; the sequence is STCILPNIEAVSNVHNLNSVKESPHERMHRHIE. Residues 175–195 traverse the membrane as a helical segment; sequence LAWAFSTVIGTLLFLAEVVLL. At 196 to 237 the chain is on the extracellular side; the sequence is CWVKFLPLKRQAGQPSPTKPPTEPAVVVANSSNNGGITPGEA. A glycan (N-linked (GlcNAc...) asparagine) is linked at Asn225. A helical transmembrane segment spans residues 238-258; the sequence is AAIASTAIMVPCGLVFIVFAV. Topologically, residues 259 to 304 are cytoplasmic; that stretch reads HFYRSLVSHKTDRQFQELNELAEFARLQDQLDHRGDHSLTPGTHYA. The interval 275–295 is interaction with STIM1; it reads ELNELAEFARLQDQLDHRGDH. Position 298 is a phosphothreonine (Thr298).

It belongs to the Orai family. As to quaternary structure, oligomerizes in homomeric and heteromeric ORAI complexes. Native CRAC channels most likely consist of hexameric ORAI heteromers, implying that diverse ORAI1, ORAI2 and ORAI3 subunit combinations with distinct biophysical properties can operate in a cell-type specific way. ARC channels are heteropentamers consisting of three ORAI1 and two ORAI3 subunits. Interacts with STIM1 and STIM2; this regulates channel activity. Interacts with CALM; this may displace STIM1 and STIM2 and might thereby modulate channel activity. Interacts (via N-terminus) with AKAP5 upon store depletion. Interacts with CRACR2A/EFCAB4B; the interaction is direct and takes place in absence of Ca(2+). Forms a complex with CRACR2A/EFCAB4B and STIM1 at low concentration of Ca(2+), the complex dissociates at elevated Ca(2+) concentrations. Interacts with ASPH (isoform 8). Interacts with SLC35G1. Interacts with UBQLN1. Interacts with ADCY8; interaction is calcium store depletion independent; interaction occurs in membrane raft; interaction increases markedly after store depletion; positively regulates SOCE-induced adenylate cyclase activity; contributes to the targeting of ADCY8 to discrete regions of the plasma membrane that are shielded from other calcium events. Interacts with EFHB; the interaction takes place upon Ca(2+)-store depletion. Interacts (via N- and C-termini) with ATP2C2 (via N-terminus); this interaction regulates Ca(2+) influx at the plasma membrane. Interacts with TSPAN18; this interaction regulates ORAI1 exit from the endoplasmic (ER), and/or Golgi, and trafficking to the cell surface. In terms of processing, N-glycosylated. N-glycosylation inhibits channel activity in T cells. Post-translationally, ubiquitinated. Cys-195 is oxidated, leading to inactivation of channel activity.

The protein resides in the cell membrane. It localises to the basolateral cell membrane. The catalysed reaction is Ca(2+)(in) = Ca(2+)(out). Oxidation at Cys-196 leads to inactivation of channel activity. Functionally, pore-forming subunit of two major inward rectifying Ca(2+) channels at the plasma membrane: Ca(2+) release-activated Ca(2+) (CRAC) channels and arachidonate-regulated Ca(2+)-selective (ARC) channels. Assembles with ORAI2 and ORAI3 to form hexameric CRAC channels that mediate Ca(2+) influx upon depletion of endoplasmic reticulum Ca(2+) store and channel activation by Ca(2+) sensor STIM1, a process known as store-operated Ca(2+) entry (SOCE). Various pore subunit combinations may account for distinct CRAC channel spatiotemporal and cell-type specific dynamics. ORAI1 mainly contributes to the generation of Ca(2+) plateaus involved in sustained Ca(2+) entry and is dispensable for cytosolic Ca(2+) oscillations, whereas ORAI2 and ORAI3 generate oscillatory patterns. CRAC channels assemble in Ca(2+) signaling microdomains where Ca(2+) influx is coupled to calmodulin and calcineurin signaling and activation of NFAT transcription factors recruited to ORAI1 via AKAP5. Activates NFATC2/NFAT1 and NFATC3/NFAT4-mediated transcriptional responses. CRAC channels are the main pathway for Ca(2+) influx in T cells and promote the immune response to pathogens by activating NFAT-dependent cytokine and chemokine transcription. Assembles with ORAI3 to form channels that mediate store-independent Ca(2+) influx in response to inflammatory metabolites arachidonate or its derivative leukotriene C4, termed ARC and LRC channels respectively. Plays a prominent role in Ca(2+) influx at the basolateral membrane of mammary epithelial cells independently of the Ca(2+) content of endoplasmic reticulum or Golgi stores. May mediate transepithelial transport of large quantities of Ca(2+) for milk secretion. This chain is Calcium release-activated calcium channel protein 1 (Orai1), found in Rattus norvegicus (Rat).